The primary structure comprises 345 residues: Hydroxymethylglutaryl-CoA synthase (345 aa).

Aspartate 28 lines the (3S)-3-hydroxy-3-methylglutaryl-CoA pocket. Residue glutamate 80 is the Proton donor/acceptor of the active site. Positions 112 and 153 each coordinate (3S)-3-hydroxy-3-methylglutaryl-CoA. Residue cysteine 112 is the Acyl-thioester intermediate of the active site. Arginine 199 serves as a coordination point for CoA. Residues threonine 201 and histidine 234 each contribute to the (3S)-3-hydroxy-3-methylglutaryl-CoA site. Histidine 234 serves as the catalytic Proton donor/acceptor. Position 239 (lysine 239) interacts with CoA. (3S)-3-hydroxy-3-methylglutaryl-CoA contacts are provided by arginine 243, asparagine 266, and serine 296.

Belongs to the thiolase-like superfamily. Archaeal HMG-CoA synthase family. In terms of assembly, interacts with acetoacetyl-CoA thiolase that catalyzes the precedent step in the pathway and with a DUF35 protein. The acetoacetyl-CoA thiolase/HMG-CoA synthase complex channels the intermediate via a fused CoA-binding site, which allows for efficient coupling of the endergonic thiolase reaction with the exergonic HMGCS reaction.

The catalysed reaction is acetoacetyl-CoA + acetyl-CoA + H2O = (3S)-3-hydroxy-3-methylglutaryl-CoA + CoA + H(+). Its pathway is metabolic intermediate biosynthesis; (R)-mevalonate biosynthesis; (R)-mevalonate from acetyl-CoA: step 2/3. Functionally, catalyzes the condensation of acetyl-CoA with acetoacetyl-CoA to form 3-hydroxy-3-methylglutaryl-CoA (HMG-CoA). Functions in the mevalonate (MVA) pathway leading to isopentenyl diphosphate (IPP), a key precursor for the biosynthesis of isoprenoid compounds that are building blocks of archaeal membrane lipids. The polypeptide is Hydroxymethylglutaryl-CoA synthase (Methanobrevibacter smithii (strain ATCC 35061 / DSM 861 / OCM 144 / PS)).